The primary structure comprises 668 residues: Fructose-1,6-bisphosphatase class 3 (668 aa).

Belongs to the FBPase class 3 family. Mn(2+) is required as a cofactor.

The catalysed reaction is beta-D-fructose 1,6-bisphosphate + H2O = beta-D-fructose 6-phosphate + phosphate. It functions in the pathway carbohydrate biosynthesis; gluconeogenesis. The protein is Fructose-1,6-bisphosphatase class 3 of Clostridium botulinum (strain Okra / Type B1).